The chain runs to 344 residues: Arginine N-succinyltransferase (344 aa).

L125 contacts succinyl-CoA. Catalysis depends on H229, which acts as the Proton donor.

Belongs to the arginine N-succinyltransferase family.

It catalyses the reaction succinyl-CoA + L-arginine = N(2)-succinyl-L-arginine + CoA + H(+). It functions in the pathway amino-acid degradation; L-arginine degradation via AST pathway; L-glutamate and succinate from L-arginine: step 1/5. Catalyzes the transfer of succinyl-CoA to arginine to produce N(2)-succinylarginine. In Enterobacter sp. (strain 638), this protein is Arginine N-succinyltransferase.